Reading from the N-terminus, the 459-residue chain is tRNA modification GTPase MnmE (459 aa).

3 residues coordinate (6S)-5-formyl-5,6,7,8-tetrahydrofolate: arginine 23, glutamate 88, and arginine 127. In terms of domain architecture, TrmE-type G spans 223 to 381 (GLSVVIVGKP…IKNCIKELFF (159 aa)). Asparagine 233 provides a ligand contact to K(+). GTP is bound by residues 233–238 (NVGKSS), 252–258 (TDIPGTT), and 277–280 (DTAG). Serine 237 is a Mg(2+) binding site. K(+) is bound by residues threonine 252, isoleucine 254, and threonine 257. Mg(2+) is bound at residue threonine 258. Lysine 459 contributes to the (6S)-5-formyl-5,6,7,8-tetrahydrofolate binding site.

It belongs to the TRAFAC class TrmE-Era-EngA-EngB-Septin-like GTPase superfamily. TrmE GTPase family. Homodimer. Heterotetramer of two MnmE and two MnmG subunits. It depends on K(+) as a cofactor.

It is found in the cytoplasm. In terms of biological role, exhibits a very high intrinsic GTPase hydrolysis rate. Involved in the addition of a carboxymethylaminomethyl (cmnm) group at the wobble position (U34) of certain tRNAs, forming tRNA-cmnm(5)s(2)U34. The protein is tRNA modification GTPase MnmE of Clostridium kluyveri (strain ATCC 8527 / DSM 555 / NBRC 12016 / NCIMB 10680 / K1).